The following is a 154-amino-acid chain: Myoglobin (154 aa).

The 147-residue stretch at 2–148 folds into the Globin domain; it reads GLSEGEWQLV…FRKDIAAKYK (147 aa). A Phosphoserine modification is found at Ser4. His65 is a nitrite binding site. O2 is bound at residue His65. Phosphothreonine is present on Thr68. A heme b-binding site is contributed by His94.

Monomer.

It is found in the cytoplasm. The protein localises to the sarcoplasm. The enzyme catalyses Fe(III)-heme b-[protein] + nitric oxide + H2O = Fe(II)-heme b-[protein] + nitrite + 2 H(+). The catalysed reaction is H2O2 + AH2 = A + 2 H2O. Functionally, monomeric heme protein which primary function is to store oxygen and facilitate its diffusion within muscle tissues. Reversibly binds oxygen through a pentacoordinated heme iron and enables its timely and efficient release as needed during periods of heightened demand. Depending on the oxidative conditions of tissues and cells, and in addition to its ability to bind oxygen, it also has a nitrite reductase activity whereby it regulates the production of bioactive nitric oxide. Under stress conditions, like hypoxia and anoxia, it also protects cells against reactive oxygen species thanks to its pseudoperoxidase activity. This Delphinapterus leucas (Beluga whale) protein is Myoglobin (MB).